The primary structure comprises 338 residues: Ornithine carbamoyltransferase (338 aa).

Carbamoyl phosphate contacts are provided by residues 56–59, Gln83, Arg107, and 134–137; these read STRT and HPTQ. Residues Asn168, Asp232, and 236-237 each bind L-ornithine; that span reads SM. Residues 274 to 275 and Arg320 each bind carbamoyl phosphate; that span reads CL.

Belongs to the aspartate/ornithine carbamoyltransferase superfamily. OTCase family.

It localises to the cytoplasm. It catalyses the reaction carbamoyl phosphate + L-ornithine = L-citrulline + phosphate + H(+). It participates in amino-acid biosynthesis; L-arginine biosynthesis; L-arginine from L-ornithine and carbamoyl phosphate: step 1/3. Functionally, reversibly catalyzes the transfer of the carbamoyl group from carbamoyl phosphate (CP) to the N(epsilon) atom of ornithine (ORN) to produce L-citrulline. The chain is Ornithine carbamoyltransferase from Photorhabdus laumondii subsp. laumondii (strain DSM 15139 / CIP 105565 / TT01) (Photorhabdus luminescens subsp. laumondii).